A 98-amino-acid polypeptide reads, in one-letter code: Defensin (98 aa).

Positions 1–19 (MRTFLVTFVLVVVVGVISA) are cleaved as a signal peptide. A propeptide spanning residues 20–58 (YPSNPVEVEAEDFDAQDPDLQTFQDTFYEVPQVHSRQKR) is cleaved from the precursor. Intrachain disulfides connect Cys61-Cys88, Cys74-Cys94, and Cys78-Cys96.

In terms of tissue distribution, is synthesized by the fat body and eventually secreted into the hemolymph.

The protein localises to the secreted. Functionally, has antiparasitic activity against promastigote forms of L.major, and antibacterial activity against Gram-positive bacterium S.aureus. Has antifungal activity against the yeasts C.albicans and S.cerevisiae, but not C.glabrata. Has antifungal activity against filamentous fungi A.fumigatus, F.culmorum, F.oxysporum, N.crassa, T.viride and T.mentagrophytes, but not B.bassiana. The sequence is that of Defensin from Phlebotomus duboscqi (Sandfly).